A 132-amino-acid chain; its full sequence is Large ribosomal subunit protein uL14 (132 aa).

It belongs to the universal ribosomal protein uL14 family. Part of the 50S ribosomal subunit. Forms a cluster with proteins L3 and L24e, part of which may contact the 16S rRNA in 2 intersubunit bridges.

Binds to 23S rRNA. Forms part of two intersubunit bridges in the 70S ribosome. The chain is Large ribosomal subunit protein uL14 from Methanococcus vannielii.